A 720-amino-acid polypeptide reads, in one-letter code: Engulfment and cell motility protein 3 (720 aa).

The ELMO domain occupies 307–479 (EQREQLQVLR…VVREQLARTL (173 aa)). The 123-residue stretch at 542-664 (RLCEGTLFRK…TDGLSALLGS (123 aa)) folds into the PH domain. Residues 696–706 (PERPPPVPPPP) carry the SH3-binding motif.

Probably interacts directly with the SH3-domain of DOCK1 via its SH3-binding site. Part of a complex with DOCK1 and RAC1. Interacts with ADGRB3.

The protein localises to the cytoplasm. Functionally, involved in cytoskeletal rearrangements required for phagocytosis of apoptotic cells and cell motility. Acts in association with DOCK1 and CRK. Was initially proposed to be required in complex with DOCK1 to activate Rac Rho small GTPases. May enhance the guanine nucleotide exchange factor (GEF) activity of DOCK1. The polypeptide is Engulfment and cell motility protein 3 (ELMO3) (Homo sapiens (Human)).